The sequence spans 296 residues: MSQPLLQSHLTSLPLIHRGKVRDLYAVGDDHLLIVTTDRVSAFDVILPTPIPGKGEVLTKISEFWFRKLEHIVPNQLADMSLAEAVPDAAERAPLEGRSLVVKRLKALPIEAVVRGYLIGSGWKDYQKTGQVCGNPLPAGLQLADRLPEPIYTPSTKAAVGDHDENVDFDYTAELVGPELAAQVRQTALALYKAAAEYALARGIIIADTKFEFGLDDEGVLHLIDEALTPDSSRFWPADTYRPGISPPSFDKQFVRDYLETLDWNKQAPGPELPPDVVQKTTEKYREALLRLTGAS.

The protein belongs to the SAICAR synthetase family.

The catalysed reaction is 5-amino-1-(5-phospho-D-ribosyl)imidazole-4-carboxylate + L-aspartate + ATP = (2S)-2-[5-amino-1-(5-phospho-beta-D-ribosyl)imidazole-4-carboxamido]succinate + ADP + phosphate + 2 H(+). It participates in purine metabolism; IMP biosynthesis via de novo pathway; 5-amino-1-(5-phospho-D-ribosyl)imidazole-4-carboxamide from 5-amino-1-(5-phospho-D-ribosyl)imidazole-4-carboxylate: step 1/2. The protein is Phosphoribosylaminoimidazole-succinocarboxamide synthase of Thioalkalivibrio sulfidiphilus (strain HL-EbGR7).